Reading from the N-terminus, the 780-residue chain is Molybdenum cofactor sulfurase (780 aa).

Lys246 is subject to N6-(pyridoxal phosphate)lysine. The active site involves Cys413. Residues 635–780 (LRLLRQSGQR…MTCGDVVLVE (146 aa)) enclose the MOSC domain. Ser734 bears the Phosphoserine mark.

Belongs to the class-V pyridoxal-phosphate-dependent aminotransferase family. MOCOS subfamily. The cofactor is pyridoxal 5'-phosphate.

The enzyme catalyses Mo-molybdopterin + L-cysteine + AH2 = thio-Mo-molybdopterin + L-alanine + A + H2O. Its function is as follows. Sulfurates the molybdenum cofactor. Sulfation of molybdenum is essential for xanthine dehydrogenase (XDH) and aldehyde oxidase (ADO) enzymes in which molybdenum cofactor is liganded by 1 oxygen and 1 sulfur atom in active form. This chain is Molybdenum cofactor sulfurase, found in Drosophila yakuba (Fruit fly).